Consider the following 160-residue polypeptide: Protein BOLA1, chloroplastic (160 aa).

Residues 1–50 (MFSSSIRLIVSGFHRTQPLKSPVNSPSVFISVPKFFNSESKSTGTGSRSV) constitute a chloroplast transit peptide. The span at 39-61 (ESKSTGTGSRSVAMSSVEKTGSD) shows a compositional bias: polar residues. A disordered region spans residues 39–66 (ESKSTGTGSRSVAMSSVEKTGSDSGAIE).

Belongs to the bolA/yrbA family. As to quaternary structure, interacts in vitro with GRXS14, GRXS15, GRXS16 and GRXS17, but not with GRXC5. Interacts in vivo only with GRXS14 and GRXS16.

The protein localises to the plastid. Its subcellular location is the chloroplast. Its function is as follows. May act either alone or in interaction with glutaredoxin as a redox-regulated transcriptional regulator, or as a factor regulating Fe-S cluster biogenesis. The glutaredoxin-BOLA1 heterodimers bind a labile, oxygen sensitive iron-sulfur cluster. The sequence is that of Protein BOLA1, chloroplastic from Arabidopsis thaliana (Mouse-ear cress).